A 940-amino-acid chain; its full sequence is Isoleucine--tRNA ligase (940 aa).

The 'HIGH' region signature appears at 58–68 (PYANGSIHIGH). Glutamate 564 provides a ligand contact to L-isoleucyl-5'-AMP. The 'KMSKS' region signature appears at 605–609 (KMSKS). Residue lysine 608 participates in ATP binding. Zn(2+) is bound by residues cysteine 903, cysteine 906, cysteine 923, and cysteine 926.

The protein belongs to the class-I aminoacyl-tRNA synthetase family. IleS type 1 subfamily. Monomer. Zn(2+) serves as cofactor.

The protein localises to the cytoplasm. It carries out the reaction tRNA(Ile) + L-isoleucine + ATP = L-isoleucyl-tRNA(Ile) + AMP + diphosphate. In terms of biological role, catalyzes the attachment of isoleucine to tRNA(Ile). As IleRS can inadvertently accommodate and process structurally similar amino acids such as valine, to avoid such errors it has two additional distinct tRNA(Ile)-dependent editing activities. One activity is designated as 'pretransfer' editing and involves the hydrolysis of activated Val-AMP. The other activity is designated 'posttransfer' editing and involves deacylation of mischarged Val-tRNA(Ile). This is Isoleucine--tRNA ligase from Shewanella oneidensis (strain ATCC 700550 / JCM 31522 / CIP 106686 / LMG 19005 / NCIMB 14063 / MR-1).